The primary structure comprises 89 residues: Putative regulatory protein CYA_2696 (89 aa).

The protein belongs to the RemA family.

The chain is Putative regulatory protein CYA_2696 from Synechococcus sp. (strain JA-3-3Ab) (Cyanobacteria bacterium Yellowstone A-Prime).